A 181-amino-acid polypeptide reads, in one-letter code: Oligoribonuclease (181 aa).

In terms of domain architecture, Exonuclease spans 8-171 (LVWLDMEMTG…ADIYESIDEL (164 aa)). Tyrosine 129 is an active-site residue.

This sequence belongs to the oligoribonuclease family.

The protein localises to the cytoplasm. 3'-to-5' exoribonuclease specific for small oligoribonucleotides. The sequence is that of Oligoribonuclease from Bordetella bronchiseptica (strain ATCC BAA-588 / NCTC 13252 / RB50) (Alcaligenes bronchisepticus).